The primary structure comprises 203 residues: Endoplasmic reticulum transmembrane protein 3 (203 aa).

The Lumenal segment spans residues 1–6 (MSLYYT). Residues 7 to 27 (LVFAILVVEIFMFSILALPIP) form a helical membrane-spanning segment. Topologically, residues 28–45 (SRYRRPLTLLLLKPFKSS) are cytoplasmic. Residues 46-66 (TVQVAIKCVLGFILLLFIDCI) traverse the membrane as a helical segment. The Lumenal segment spans residues 67-110 (NRVYSIDKELQLSSASQNNGAIIAQDRIEVLSRKFFAQRNMYLT). A helical membrane pass occupies residues 111–131 (GITLFLTFVVVRTFGLVIELL). Residues 132-203 (TMKDIYRASP…KSESLQEEIN (72 aa)) are Cytoplasmic-facing. A disordered region spans residues 142-171 (PVASSDVKKNDSVTAEAAAQSGASKDDHGD).

This sequence belongs to the BCAP29/BCAP31 family.

It localises to the endoplasmic reticulum membrane. Its function is as follows. May play a role in anterograde transport of membrane proteins from the endoplasmic reticulum to the Golgi. May be involved in invertase secretion. This chain is Endoplasmic reticulum transmembrane protein 3 (YET3), found in Saccharomyces cerevisiae (strain ATCC 204508 / S288c) (Baker's yeast).